The chain runs to 1128 residues: Zinc finger protein 654 (1128 aa).

The disordered stretch occupies residues 498 to 523; it reads GFDSLTDQSTGETDPDDVSGVQPKGH. 5 C2H2-type zinc fingers span residues 572 to 594, 746 to 771, 787 to 809, 815 to 839, and 844 to 868; these read FACV…LKNH, FKCP…MTVH, GKCK…LNRH, YFCL…TKSH, and AQCS…EAQH. The segment at 891-951 is disordered; it reads DSNPNQEKDS…GNERSDDTVS (61 aa). Polar residues-rich tracts occupy residues 903–915 and 937–951; these read NEKQ…VSTS and SLVQ…DTVS. Phosphoserine occurs at positions 1123 and 1127.

The protein belongs to the krueppel C2H2-type zinc-finger protein family.

It localises to the nucleus. In terms of biological role, may be involved in transcriptional regulation. In Homo sapiens (Human), this protein is Zinc finger protein 654.